The primary structure comprises 229 residues: Enolase-phosphatase E1 (229 aa).

This sequence belongs to the HAD-like hydrolase superfamily. MasA/MtnC family. As to quaternary structure, monomer. The cofactor is Mg(2+).

It carries out the reaction 5-methylsulfanyl-2,3-dioxopentyl phosphate + H2O = 1,2-dihydroxy-5-(methylsulfanyl)pent-1-en-3-one + phosphate. It participates in amino-acid biosynthesis; L-methionine biosynthesis via salvage pathway; L-methionine from S-methyl-5-thio-alpha-D-ribose 1-phosphate: step 3/6. It functions in the pathway amino-acid biosynthesis; L-methionine biosynthesis via salvage pathway; L-methionine from S-methyl-5-thio-alpha-D-ribose 1-phosphate: step 4/6. In terms of biological role, bifunctional enzyme that catalyzes the enolization of 2,3-diketo-5-methylthiopentyl-1-phosphate (DK-MTP-1-P) into the intermediate 2-hydroxy-3-keto-5-methylthiopentenyl-1-phosphate (HK-MTPenyl-1-P), which is then dephosphorylated to form the acireductone 1,2-dihydroxy-3-keto-5-methylthiopentene (DHK-MTPene). The polypeptide is Enolase-phosphatase E1 (Pectobacterium atrosepticum (strain SCRI 1043 / ATCC BAA-672) (Erwinia carotovora subsp. atroseptica)).